We begin with the raw amino-acid sequence, 335 residues long: MTQEVPRRLEPSPFEWKGDAGPSVKTLRPHAIPSVAIDLASVTKSYGDKPVVDGLSFTVAAGECFGLLGPNGAGKSTITRMILGMTTPATGVITVLGVPVPSRARLARMGIGVVPQFDNLDSEFTVRENLLVFGRYFRMSTREIEAVIPSLLEFARLENKVDARVSDLSGGMKRRLTLARALINDPQLLILDEPTTGLDPHARHLIWERLRSLLARGKTILLTTHIMEEAERLCDRLCVLEAGRKIAEGRPHVLIDEKIGCQVIEIYGGNPHELSALVSPHARHVEVSGETVFCYALDPEQVRVQLDGCAGVRFLQRPPNLEDVFLRLTGRELKD.

Residues 1–10 (MTQEVPRRLE) are compositionally biased toward basic and acidic residues. Residues 1-22 (MTQEVPRRLEPSPFEWKGDAGP) form a disordered region. The region spanning 37–267 (IDLASVTKSY…KIGCQVIEIY (231 aa)) is the ABC transporter domain. ATP is bound at residue 69–76 (GPNGAGKS).

The protein belongs to the ABC transporter superfamily. Lipooligosaccharide exporter (TC 3.A.1.102) family. The complex is composed of two ATP-binding proteins (NodI) and two transmembrane proteins (NodJ).

It localises to the cell inner membrane. In terms of biological role, part of the ABC transporter complex NodIJ involved in the export of the nodulation factors (Nod factors), the bacterial signal molecules that induce symbiosis and subsequent nodulation induction. Nod factors are LCO (lipo-chitin oligosaccharide), a modified beta-1,4-linked N-acetylglucosamine oligosaccharide. This subunit is responsible for energy coupling to the transport system. This Rhizobium meliloti (Ensifer meliloti) protein is Nod factor export ATP-binding protein I.